We begin with the raw amino-acid sequence, 70 residues long: Small ribosomal subunit protein bS21 (70 aa).

Belongs to the bacterial ribosomal protein bS21 family.

The protein is Small ribosomal subunit protein bS21 of Laribacter hongkongensis (strain HLHK9).